The sequence spans 370 residues: Quinolinate synthase (370 aa).

Iminosuccinate-binding residues include histidine 62 and serine 83. Residue cysteine 128 participates in [4Fe-4S] cluster binding. Iminosuccinate is bound by residues 154 to 156 (YAN) and serine 171. [4Fe-4S] cluster is bound at residue cysteine 215. Residues 241 to 243 (HPE) and threonine 258 each bind iminosuccinate. Cysteine 312 is a [4Fe-4S] cluster binding site.

Belongs to the quinolinate synthase family. Type 1 subfamily. Requires [4Fe-4S] cluster as cofactor.

It is found in the cytoplasm. It carries out the reaction iminosuccinate + dihydroxyacetone phosphate = quinolinate + phosphate + 2 H2O + H(+). It functions in the pathway cofactor biosynthesis; NAD(+) biosynthesis; quinolinate from iminoaspartate: step 1/1. Its function is as follows. Catalyzes the condensation of iminoaspartate with dihydroxyacetone phosphate to form quinolinate. In Neisseria meningitidis serogroup C / serotype 2a (strain ATCC 700532 / DSM 15464 / FAM18), this protein is Quinolinate synthase.